The following is a 104-amino-acid chain: PLAT domain-containing protein 3 (104 aa).

The 104-residue stretch at 1-104 folds into the PLAT domain; it reads MSLRLYDSYG…LARDASPYEL (104 aa).

The polypeptide is PLAT domain-containing protein 3 (Arabidopsis thaliana (Mouse-ear cress)).